The chain runs to 589 residues: Enhancer of polycomb-like protein 1 (589 aa).

Disordered stretches follow at residues 298–339 (GDED…RPAE), 403–430 (MTPPASASSGSMDEPTPMDLDKPKPNPP), 468–497 (LPSPARDLSEEQSDRWKYDQSSDDEDDAPV), and 516–589 (LQTV…QPVS). The segment covering 474 to 487 (DLSEEQSDRWKYDQ) has biased composition (basic and acidic residues). Low complexity predominate over residues 557-566 (PQPNQSQSLP). Pro residues predominate over residues 567–589 (LPQPQQPVAQPQPQPQPQAQPVS).

Belongs to the enhancer of polycomb family. As to quaternary structure, component of the NuA4 histone acetyltransferase complex.

It is found in the nucleus. In terms of biological role, component of the NuA4 histone acetyltransferase complex which is involved in transcriptional activation of selected genes principally by acetylation of nucleosomal histone H4 and H2A. The NuA4 complex is also involved in DNA repair. Involved in gene silencing by neighboring heterochromatin, blockage of the silencing spreading along the chromosome, and required for cell cycle progression through G2/M. This chain is Enhancer of polycomb-like protein 1 (epl-1), found in Neurospora crassa (strain ATCC 24698 / 74-OR23-1A / CBS 708.71 / DSM 1257 / FGSC 987).